We begin with the raw amino-acid sequence, 321 residues long: ATP-dependent 6-phosphofructokinase (321 aa).

Residue Gly-11 participates in ATP binding. 21-25 serves as a coordination point for ADP; sequence RAVVR. ATP-binding positions include 72–73 and 102–105; these read RC and GDGS. Asp-103 serves as a coordination point for Mg(2+). A substrate-binding site is contributed by 126–128; the sequence is TID. The Proton acceptor role is filled by Asp-128. Arg-155 lines the ADP pocket. Residues Arg-163 and 170 to 172 each bind substrate; that span reads MGR. Residues 186–188, Arg-212, and 214–216 each bind ADP; these read GAE and KLH. Residues Glu-223, Arg-245, and 251 to 254 contribute to the substrate site; that span reads HIQR.

The protein belongs to the phosphofructokinase type A (PFKA) family. ATP-dependent PFK group I subfamily. Prokaryotic clade 'B1' sub-subfamily. In terms of assembly, homotetramer. Mg(2+) is required as a cofactor.

It localises to the cytoplasm. It carries out the reaction beta-D-fructose 6-phosphate + ATP = beta-D-fructose 1,6-bisphosphate + ADP + H(+). The protein operates within carbohydrate degradation; glycolysis; D-glyceraldehyde 3-phosphate and glycerone phosphate from D-glucose: step 3/4. Allosterically activated by ADP and other diphosphonucleosides, and allosterically inhibited by phosphoenolpyruvate. In terms of biological role, catalyzes the phosphorylation of D-fructose 6-phosphate to fructose 1,6-bisphosphate by ATP, the first committing step of glycolysis. The chain is ATP-dependent 6-phosphofructokinase from Thermoanaerobacter pseudethanolicus (strain ATCC 33223 / 39E) (Clostridium thermohydrosulfuricum).